Consider the following 172-residue polypeptide: Keratin-associated protein 13-3 (172 aa).

Tandem repeats lie at residues 46–55 (CQLGSSLYRG), 56–65 (CQETCWRPNS), 66–75 (CQTLCVESSP), 76–85 (CHTSCYYPRT), and 92–101 (CLTMHVGSRG). Residues 46–101 (CQLGSSLYRGCQETCWRPNSCQTLCVESSPCHTSCYYPRTHMLCNSCLTMHVGSRG) form a 5 X 10 AA approximate repeats region.

The protein belongs to the PMG family. Interacts with hair keratins.

Its function is as follows. In the hair cortex, hair keratin intermediate filaments are embedded in an interfilamentous matrix, consisting of hair keratin-associated proteins (KRTAP), which are essential for the formation of a rigid and resistant hair shaft through their extensive disulfide bond cross-linking with abundant cysteine residues of hair keratins. The matrix proteins include the high-sulfur and high-glycine-tyrosine keratins. The sequence is that of Keratin-associated protein 13-3 (KRTAP13-3) from Homo sapiens (Human).